The primary structure comprises 510 residues: GMP synthase [glutamine-hydrolyzing] (510 aa).

Positions 5–195 constitute a Glutamine amidotransferase type-1 domain; the sequence is TVVVLDFGGQ…LFEICGLRGD (191 aa). Cysteine 82 serves as the catalytic Nucleophile. Residues histidine 169 and glutamate 171 contribute to the active site. The GMPS ATP-PPase domain maps to 196 to 385; it reads WDLSDFISEA…LGIPAEILWR (190 aa). 223–229 is a binding site for ATP; that stretch reads SGGVDSS.

Homodimer.

The enzyme catalyses XMP + L-glutamine + ATP + H2O = GMP + L-glutamate + AMP + diphosphate + 2 H(+). It functions in the pathway purine metabolism; GMP biosynthesis; GMP from XMP (L-Gln route): step 1/1. In terms of biological role, catalyzes the synthesis of GMP from XMP. The chain is GMP synthase [glutamine-hydrolyzing] from Syntrophomonas wolfei subsp. wolfei (strain DSM 2245B / Goettingen).